A 922-amino-acid polypeptide reads, in one-letter code: Histidine kinase 5 (922 aa).

Coiled-coil stretches lie at residues Met-86–Lys-120 and Lys-169–Ala-205. The 242-residue stretch at Thr-373–Val-614 folds into the Histidine kinase domain. Phosphohistidine; by autocatalysis is present on His-376. Disordered regions lie at residues Tyr-620–Asp-639 and Asn-728–Lys-773. Over residues Ser-738–Glu-747 the composition is skewed to low complexity. Residues Ser-761–Lys-773 are compositionally biased toward basic and acidic residues. The 143-residue stretch at Lys-779 to Leu-921 folds into the Response regulatory domain. Asp-785, Asp-828, and Cys-830 together coordinate Mg(2+). Asp-828 bears the 4-aspartylphosphate mark.

As to quaternary structure, interacts with AHP1, APH2, APH3, APH5 and APH6, but not with APH4. In terms of tissue distribution, present in light-grown but not in etiolated seedlings. Mostly expressed in roots flowers and siliques, and, to a lower extent, in stems and leaves, especially in guard cells.

The protein localises to the cell membrane. It is found in the cytoplasm. The catalysed reaction is ATP + protein L-histidine = ADP + protein N-phospho-L-histidine.. Functionally, functions as a histidine kinase and transmits the stress signal to a downstream MAPK cascade. This protein undergoes an ATP-dependent autophosphorylation at a conserved histidine residue in the kinase core, and a phosphoryl group is then transferred to a conserved aspartate residue in the receiver domain. Negative regulator of the ETR1-dependent abscisic acid (ABA) and ethylene signaling pathway that inhibits the root elongation. Promotes stomatal closure. Regulates stomatal opening by integrating multiple signals via hydrogen peroxide H(2)O(2) homeostasis in guard cells in an ABA-independent manner. May contribute to basal defense mechanisms by closing stomata in the presence of bacterial pathogens. Regulates both hormone levels and ROS production in response to stress. Required for full immunity to bacterial pathogen and necrotrophic fungus. The polypeptide is Histidine kinase 5 (AHK5) (Arabidopsis thaliana (Mouse-ear cress)).